The sequence spans 201 residues: Prostamide/prostaglandin F synthase (201 aa).

It belongs to the peroxiredoxin-like PRXL2 family. Prostamide/prostaglandin F synthase subfamily.

It is found in the cytoplasm. It localises to the cytosol. It catalyses the reaction prostaglandin H2 + [thioredoxin]-dithiol = prostaglandin F2alpha + [thioredoxin]-disulfide. It carries out the reaction prostamide F2alpha + [thioredoxin]-disulfide = prostamide H2 + [thioredoxin]-dithiol. In terms of biological role, catalyzes the reduction of prostaglandin-ethanolamide H(2) (prostamide H(2)) to prostamide F(2alpha) with NADPH as proton donor. Also able to reduce prostaglandin H(2) to prostaglandin F(2alpha). The polypeptide is Prostamide/prostaglandin F synthase (prxl2b) (Aquarana catesbeiana (American bullfrog)).